Consider the following 156-residue polypeptide: ATP synthase subunit b (156 aa).

Residues 7-29 (LLGQAISFLLFVWFCMKFVWPPL) traverse the membrane as a helical segment.

The protein belongs to the ATPase B chain family. As to quaternary structure, F-type ATPases have 2 components, F(1) - the catalytic core - and F(0) - the membrane proton channel. F(1) has five subunits: alpha(3), beta(3), gamma(1), delta(1), epsilon(1). F(0) has three main subunits: a(1), b(2) and c(10-14). The alpha and beta chains form an alternating ring which encloses part of the gamma chain. F(1) is attached to F(0) by a central stalk formed by the gamma and epsilon chains, while a peripheral stalk is formed by the delta and b chains.

The protein resides in the cell inner membrane. In terms of biological role, f(1)F(0) ATP synthase produces ATP from ADP in the presence of a proton or sodium gradient. F-type ATPases consist of two structural domains, F(1) containing the extramembraneous catalytic core and F(0) containing the membrane proton channel, linked together by a central stalk and a peripheral stalk. During catalysis, ATP synthesis in the catalytic domain of F(1) is coupled via a rotary mechanism of the central stalk subunits to proton translocation. Functionally, component of the F(0) channel, it forms part of the peripheral stalk, linking F(1) to F(0). This is ATP synthase subunit b from Shewanella halifaxensis (strain HAW-EB4).